The chain runs to 427 residues: Trigger factor (427 aa).

Residues 163–248 (GDTVVIDFVG…IHEVKAKEVP (86 aa)) enclose the PPIase FKBP-type domain.

Belongs to the FKBP-type PPIase family. Tig subfamily.

The protein localises to the cytoplasm. The catalysed reaction is [protein]-peptidylproline (omega=180) = [protein]-peptidylproline (omega=0). In terms of biological role, involved in protein export. Acts as a chaperone by maintaining the newly synthesized protein in an open conformation. Functions as a peptidyl-prolyl cis-trans isomerase. This is Trigger factor from Streptococcus pneumoniae (strain Hungary19A-6).